The following is a 583-amino-acid chain: Isocitrate dehydrogenase kinase/phosphatase (583 aa).

Residues 315–321 (APGIRGM) and Lys-336 each bind ATP. Residue Asp-371 is part of the active site.

The protein belongs to the AceK family.

It localises to the cytoplasm. It carries out the reaction L-seryl-[isocitrate dehydrogenase] + ATP = O-phospho-L-seryl-[isocitrate dehydrogenase] + ADP + H(+). In terms of biological role, bifunctional enzyme which can phosphorylate or dephosphorylate isocitrate dehydrogenase (IDH) on a specific serine residue. This is a regulatory mechanism which enables bacteria to bypass the Krebs cycle via the glyoxylate shunt in response to the source of carbon. When bacteria are grown on glucose, IDH is fully active and unphosphorylated, but when grown on acetate or ethanol, the activity of IDH declines drastically concomitant with its phosphorylation. This Salmonella heidelberg (strain SL476) protein is Isocitrate dehydrogenase kinase/phosphatase.